The following is a 332-amino-acid chain: RNA polymerase principal sigma factor HrdD (332 aa).

The tract at residues 1 to 21 is disordered; sequence MATRAVARRQPAASGETGAAG. The Polymerase core binding motif lies at 124 to 137; that stretch reads DLIQEGNAGLVRAV. A DNA-binding region (H-T-H motif) is located at residues 294–313; sequence LTEVGKQHGLTRERIRQIEK.

This sequence belongs to the sigma-70 factor family.

Its function is as follows. Sigma factors are initiation factors that promote the attachment of RNA polymerase to specific initiation sites and are then released. The polypeptide is RNA polymerase principal sigma factor HrdD (hrdD) (Streptomyces griseus).